A 514-amino-acid polypeptide reads, in one-letter code: Peptide chain release factor 3 (514 aa).

Residues 8-268 (KKRRTFAIIS…SFLAFAPEPH (261 aa)) enclose the tr-type G domain. GTP contacts are provided by residues 17–24 (SHPDAGKT), 85–89 (DTPGH), and 139–142 (NKLD).

This sequence belongs to the TRAFAC class translation factor GTPase superfamily. Classic translation factor GTPase family. PrfC subfamily.

The protein localises to the cytoplasm. Functionally, increases the formation of ribosomal termination complexes and stimulates activities of RF-1 and RF-2. It binds guanine nucleotides and has strong preference for UGA stop codons. It may interact directly with the ribosome. The stimulation of RF-1 and RF-2 is significantly reduced by GTP and GDP, but not by GMP. This is Peptide chain release factor 3 from Streptococcus mutans serotype c (strain ATCC 700610 / UA159).